The following is a 557-amino-acid chain: DNA mismatch repair protein MutL (557 aa).

It belongs to the DNA mismatch repair MutL/HexB family.

In terms of biological role, this protein is involved in the repair of mismatches in DNA. It is required for dam-dependent methyl-directed DNA mismatch repair. May act as a 'molecular matchmaker', a protein that promotes the formation of a stable complex between two or more DNA-binding proteins in an ATP-dependent manner without itself being part of a final effector complex. The protein is DNA mismatch repair protein MutL of Methanothrix thermoacetophila (strain DSM 6194 / JCM 14653 / NBRC 101360 / PT) (Methanosaeta thermophila).